Consider the following 71-residue polypeptide: Small ribosomal subunit protein bS21 (71 aa).

Positions 38–71 are disordered; sequence YEKPTTERKRARASAIKRHAKKLARENARRTRLY. Positions 46–59 are enriched in basic residues; the sequence is KRARASAIKRHAKK. Positions 60-71 are enriched in basic and acidic residues; it reads LARENARRTRLY.

This sequence belongs to the bacterial ribosomal protein bS21 family.

The sequence is that of Small ribosomal subunit protein bS21 from Hamiltonella defensa subsp. Acyrthosiphon pisum (strain 5AT).